Here is a 288-residue protein sequence, read N- to C-terminus: Sulfur carrier protein FdhD (288 aa).

The disordered stretch occupies residues 1–23 (MMRCMQSPEVHPAAAGDAEPPTH). The active-site Cysteine persulfide intermediate is Cys-127.

This sequence belongs to the FdhD family.

The protein resides in the cytoplasm. Functionally, required for formate dehydrogenase (FDH) activity. Acts as a sulfur carrier protein that transfers sulfur from IscS to the molybdenum cofactor prior to its insertion into FDH. This chain is Sulfur carrier protein FdhD, found in Cupriavidus necator (strain ATCC 17699 / DSM 428 / KCTC 22496 / NCIMB 10442 / H16 / Stanier 337) (Ralstonia eutropha).